Consider the following 81-residue polypeptide: Protein Vpu (81 aa).

The Extracellular segment spans residues 1–6 (MQPIQI). Residues 7-27 (AIVALVVAIIIAIVVWSIVII) traverse the membrane as a helical segment. The Cytoplasmic portion of the chain corresponds to 28-81 (EYRKILRQRKIDRLIDRLIERAEDSGNESEGEISALVEMGVEMGHHAPWDVDDL). A phosphoserine; by host CK2 mark is found at Ser-52 and Ser-56.

The protein belongs to the HIV-1 VPU protein family. In terms of assembly, homopentamer. Interacts with host CD4 and BRTC; these interactions induce proteasomal degradation of CD4. Interacts with host BST2; this interaction leads to the degradation of host BST2. Interacts with host FBXW11. Interacts with host AP1M1; this interaction plays a role in the mistrafficking and subsequent degradation of host BST2. Interacts with host RANBP2; this interaction allows Vpu to down-regulate host BLM sumoylation. Phosphorylated by host CK2. This phosphorylation is necessary for interaction with human BTRC and degradation of CD4.

It is found in the host membrane. Its activity is regulated as follows. Ion channel activity is inhibited by hexamethylene amiloride in vitro. Functionally, enhances virion budding by targeting host CD4 and Tetherin/BST2 to proteasome degradation. Degradation of CD4 prevents any unwanted premature interactions between viral Env and its host receptor CD4 in the endoplasmic reticulum. Degradation of antiretroviral protein Tetherin/BST2 is important for virion budding, as BST2 tethers new viral particles to the host cell membrane. Mechanistically, Vpu bridges either CD4 or BST2 to BTRC, a substrate recognition subunit of the Skp1/Cullin/F-box protein E3 ubiquitin ligase, induces their ubiquitination and subsequent proteasomal degradation. The alteration of the E3 ligase specificity by Vpu seems to promote the degradation of host IKBKB, leading to NF-kappa-B down-regulation and subsequent apoptosis. Acts as a viroporin that forms an oligomeric ion channel in membranes. Modulates the host DNA repair mechanisms to promote degradation of nuclear viral cDNA in cells that are already productively infected in order to suppress immune sensing and proviral hyper-integration (superinfection). Manipulates PML-NBs and modulates SUMOylation of host BLM protein thereby enhancing its DNA-end processing activity toward viral unintegrated linear DNA. Also inhibits RAD52-mediated homologous repair of viral cDNA, preventing the generation of dead-end circular forms of single copies of the long terminal repeat and permitting sustained nucleolytic attack. The polypeptide is Protein Vpu (Human immunodeficiency virus type 1 group M subtype B (isolate BH10) (HIV-1)).